The chain runs to 134 residues: Putative thioredoxin 2 (134 aa).

The region spanning 3–106 (STVELTKENF…LTDVIGQARK (104 aa)) is the Thioredoxin domain. The cysteines at positions 31 and 34 are disulfide-linked. The tract at residues 115–134 (AVAEQQAQAGQNGQEGQEGQ) is disordered. Low complexity predominate over residues 117 to 134 (AEQQAQAGQNGQEGQEGQ).

It belongs to the thioredoxin family.

The protein resides in the cytoplasm. Component of the thioredoxin-thioredoxin reductase system. Participates in various redox reactions through the reversible oxidation of its active center dithiol to a disulfide and catalyzes dithiol-disulfide exchange reactions. The polypeptide is Putative thioredoxin 2 (trxC) (Streptomyces coelicolor (strain ATCC BAA-471 / A3(2) / M145)).